A 276-amino-acid chain; its full sequence is Type II pantothenate kinase (276 aa).

8 to 15 contacts ATP; it reads DAGGTLTK. Glutamate 76 (proton acceptor) is an active-site residue. ATP contacts are provided by residues threonine 105, 127–131, phenylalanine 143, and serine 230; that span reads GGTIM.

The protein belongs to the type II pantothenate kinase family. As to quaternary structure, homodimer.

The protein resides in the cytoplasm. The catalysed reaction is (R)-pantothenate + ATP = (R)-4'-phosphopantothenate + ADP + H(+). It participates in cofactor biosynthesis; coenzyme A biosynthesis; CoA from (R)-pantothenate: step 1/5. Functionally, catalyzes the phosphorylation of pantothenate (Pan), the first step in CoA biosynthesis. This Bacillus anthracis protein is Type II pantothenate kinase.